Consider the following 1537-residue polypeptide: Dicer-like protein 1 (1537 aa).

Residues 38–68 (SDPAESSVDVQDEHSSDDSDNENEVFPKQND) form a disordered region. Residues 133-314 (LFERAKTQNT…EAATRLETFL (182 aa)) form the Helicase ATP-binding domain. Residue 146–153 (LDTGSGKT) coordinates ATP. The short motif at 259-262 (DEAH) is the DEAH box element. The Helicase C-terminal domain maps to 459–618 (ELSKHFNDTT…EILPEDRILH (160 aa)). The Dicer dsRNA-binding fold domain maps to 651–741 (AIAILARYAS…NSIYHRRLPA (91 aa)). In terms of domain architecture, PAZ spans 891–1019 (DTVSFVHNND…ICAEPLRISA (129 aa)). RNase III domains lie at 1043–1202 (IALE…LSGG) and 1253–1405 (ARHV…VDSK). Mg(2+) contacts are provided by E1294, D1391, and E1394. Positions 1439–1507 (TFLHNKLTNE…SEKALAVLDG (69 aa)) constitute a DRBM domain. Residues C1451, H1478, C1519, and C1521 each contribute to the Zn(2+) site.

This sequence belongs to the helicase family. Dicer subfamily. Mg(2+) is required as a cofactor. Mn(2+) serves as cofactor.

In terms of biological role, dicer-like endonuclease involved in cleaving double-stranded RNA in the RNA interference (RNAi) pathway. Produces 21 to 25 bp dsRNAs (siRNAs) which target the selective destruction of homologous RNAs leading to sequence-specific suppression of gene expression, called post-transcriptional gene silencing (PTGS). Part of a broad host defense response against viral infection and transposons. This Aspergillus fumigatus (strain ATCC MYA-4609 / CBS 101355 / FGSC A1100 / Af293) (Neosartorya fumigata) protein is Dicer-like protein 1 (dcl1).